A 254-amino-acid chain; its full sequence is Short-chain dehydrogenase srdF (254 aa).

Residues Ile18, Ser37, Glu67, Asn95, Tyr167, Lys171, Val199, and Thr201 each coordinate NADP(+). Residue Tyr167 is the Proton donor of the active site. Lys171 functions as the Lowers pKa of active site Tyr in the catalytic mechanism.

This sequence belongs to the short-chain dehydrogenases/reductases (SDR) family.

Its function is as follows. Short-chain dehydrogenase; part of the gene cluster that mediates the biosynthesis of sordarial, a salicylic aldehyde structurally related to the phytotoxin pyriculol. The most interesting aspect of this pathway is formation of an aromatic product from the highly reducing polyketide synthase srdA. SrdA synthesizes a reduced polyketide chain from one molecule of acetyl-CoA and five molecules of malonyl-CoA. The polyketide chain is then reductively released as an aldehyde. The oxidoreductases srdC, srdD and srdE then oxidize one of the hydroxy groups to facilitate the intramolecular aldol condensation, followed by dehydration to yield a salicylic aldehyde. This aldehyde can undergo facile reduction by endogenous reductases to yield the alcohol 1-hydroxy-2-hydroxymethyl-3-pent-1,3-dienylbenzene. The flavin-dependent srdI counteract against the propensity of the aldehydes to be reduced under physiological conditions and is responsible for reoxidizing 1-hydroxy-2-hydroxymethyl-3-pent-1,3-dienylbenzene back to the salicylic aldehyde. This salicylic aldehyde is then selectively epoxidized by the cupin-domain-containing oxidoreductase srdB to yield the epoxide, which can be hydrolyzed stereoselectively by the hydrolase srdG to give the final product sordarial. The sequence is that of Short-chain dehydrogenase srdF from Neurospora crassa (strain ATCC 24698 / 74-OR23-1A / CBS 708.71 / DSM 1257 / FGSC 987).